Consider the following 127-residue polypeptide: MTIFQGKSGKKATGGSLKQSRKKRRFELGREPTLTKLGTKTERKVIRTMGGNTKVILFTAETANVYDASEKKIKKAKIITVKANPANSHYVQRNIINKGTVIATEIGDAVVTSRPGQDGVINAKLLK.

Positions 1-31 (MTIFQGKSGKKATGGSLKQSRKKRRFELGRE) are disordered.

This sequence belongs to the eukaryotic ribosomal protein eS8 family. In terms of assembly, part of the 30S ribosomal subunit.

In Thermoplasma acidophilum (strain ATCC 25905 / DSM 1728 / JCM 9062 / NBRC 15155 / AMRC-C165), this protein is Small ribosomal subunit protein eS8 (rps8e).